The sequence spans 341 residues: Glycerol-3-phosphate dehydrogenase [NAD(P)+] (341 aa).

NADPH contacts are provided by S15, W16, R36, and K110. Sn-glycerol 3-phosphate-binding residues include K110, G139, and S141. A143 lines the NADPH pocket. K194, D247, S257, R258, and N259 together coordinate sn-glycerol 3-phosphate. The Proton acceptor role is filled by K194. Residue R258 participates in NADPH binding. NADPH contacts are provided by V282 and E284.

The protein belongs to the NAD-dependent glycerol-3-phosphate dehydrogenase family.

Its subcellular location is the cytoplasm. The enzyme catalyses sn-glycerol 3-phosphate + NAD(+) = dihydroxyacetone phosphate + NADH + H(+). The catalysed reaction is sn-glycerol 3-phosphate + NADP(+) = dihydroxyacetone phosphate + NADPH + H(+). It participates in membrane lipid metabolism; glycerophospholipid metabolism. Its function is as follows. Catalyzes the reduction of the glycolytic intermediate dihydroxyacetone phosphate (DHAP) to sn-glycerol 3-phosphate (G3P), the key precursor for phospholipid synthesis. The protein is Glycerol-3-phosphate dehydrogenase [NAD(P)+] of Stenotrophomonas maltophilia (strain K279a).